Reading from the N-terminus, the 89-residue chain is Phosphocarrier protein HPr (89 aa).

Residues 1-88 (MLKQSIEIIN…DLINGYFGEG (88 aa)) enclose the HPr domain. The active-site Pros-phosphohistidine intermediate is the H15. At S46 the chain carries Phosphoserine; by HPrK/P.

This sequence belongs to the HPr family.

It is found in the cytoplasm. With respect to regulation, phosphorylation on Ser-46 inhibits the phosphoryl transfer from enzyme I to HPr. In terms of biological role, general (non sugar-specific) component of the phosphoenolpyruvate-dependent sugar phosphotransferase system (sugar PTS). This major carbohydrate active-transport system catalyzes the phosphorylation of incoming sugar substrates concomitantly with their translocation across the cell membrane. The phosphoryl group from phosphoenolpyruvate (PEP) is transferred to the phosphoryl carrier protein HPr by enzyme I. Phospho-HPr then transfers it to the PTS EIIA domain. This Neisseria meningitidis serogroup A / serotype 4A (strain DSM 15465 / Z2491) protein is Phosphocarrier protein HPr (ptsH).